The chain runs to 119 residues: Protein TusC (119 aa).

It belongs to the DsrF/TusC family. In terms of assembly, heterohexamer, formed by a dimer of trimers. The hexameric TusBCD complex contains 2 copies each of TusB, TusC and TusD. The TusBCD complex interacts with TusE.

The protein resides in the cytoplasm. In terms of biological role, part of a sulfur-relay system required for 2-thiolation of 5-methylaminomethyl-2-thiouridine (mnm(5)s(2)U) at tRNA wobble positions. The sequence is that of Protein TusC from Shigella boydii serotype 18 (strain CDC 3083-94 / BS512).